Reading from the N-terminus, the 548-residue chain is Membrane protein insertase YidC (548 aa).

A helical transmembrane segment spans residues 6 to 26; that stretch reads NLLVIALLFVSFMIWQAWEQD. The disordered stretch occupies residues 28–55; sequence NPQPQAQQTTQTTTTAAGSAADQGVPAS. Positions 30–50 are enriched in low complexity; the sequence is QPQAQQTTQTTTTAAGSAADQ. 4 helical membrane passes run 350 to 370, 420 to 440, 458 to 478, and 499 to 519; these read FVGNWGFSIIIITFIVRGIMY, LGGCFPLLIQMPIFLALYYML, LSAQDPYYILPILMGVTMFFI, and PVIFTVFFLWFPSGLVLYYIV.

Belongs to the OXA1/ALB3/YidC family. Type 1 subfamily. Interacts with the Sec translocase complex via SecD. Specifically interacts with transmembrane segments of nascent integral membrane proteins during membrane integration.

It is found in the cell inner membrane. Functionally, required for the insertion and/or proper folding and/or complex formation of integral membrane proteins into the membrane. Involved in integration of membrane proteins that insert both dependently and independently of the Sec translocase complex, as well as at least some lipoproteins. Aids folding of multispanning membrane proteins. This chain is Membrane protein insertase YidC, found in Shigella dysenteriae serotype 1 (strain Sd197).